The chain runs to 607 residues: Chaperone protein DnaK (607 aa).

Threonine 174 is modified (phosphothreonine; by autocatalysis). Residues 577–594 are compositionally biased toward polar residues; it reads QSAGSTAGNPGQGQSTEN. A disordered region spans residues 577-607; that stretch reads QSAGSTAGNPGQGQSTENPGGKTIDGDYKVN.

It belongs to the heat shock protein 70 family.

Acts as a chaperone. The sequence is that of Chaperone protein DnaK from Dictyoglomus turgidum (strain DSM 6724 / Z-1310).